The primary structure comprises 614 residues: UvrABC system protein C (614 aa).

The region spanning 16–94 (SRPGVYRMFG…VKSLKPRFNV (79 aa)) is the GIY-YIG domain. A UVR domain is found at 204–239 (GELQKRLASEMEAASEAMEFETAARLRDRIRAIAHV).

Belongs to the UvrC family. As to quaternary structure, interacts with UvrB in an incision complex.

Its subcellular location is the cytoplasm. Functionally, the UvrABC repair system catalyzes the recognition and processing of DNA lesions. UvrC both incises the 5' and 3' sides of the lesion. The N-terminal half is responsible for the 3' incision and the C-terminal half is responsible for the 5' incision. The chain is UvrABC system protein C from Hyphomonas neptunium (strain ATCC 15444).